The sequence spans 389 residues: Lipid-A-disaccharide synthase (389 aa).

This sequence belongs to the LpxB family.

It catalyses the reaction a lipid X + a UDP-2-N,3-O-bis[(3R)-3-hydroxyacyl]-alpha-D-glucosamine = a lipid A disaccharide + UDP + H(+). It functions in the pathway bacterial outer membrane biogenesis; LPS lipid A biosynthesis. Functionally, condensation of UDP-2,3-diacylglucosamine and 2,3-diacylglucosamine-1-phosphate to form lipid A disaccharide, a precursor of lipid A, a phosphorylated glycolipid that anchors the lipopolysaccharide to the outer membrane of the cell. This chain is Lipid-A-disaccharide synthase, found in Burkholderia cenocepacia (strain HI2424).